A 309-amino-acid chain; its full sequence is Cytochrome c biogenesis protein CcsA (309 aa).

A run of 8 helical transmembrane segments spans residues 18 to 38 (LGLL…GAVF), 43 to 63 (SFAV…QLLF), 73 to 93 (ISNL…GQLL), 102 to 122 (IIPS…CFVL), 148 to 168 (VMLS…VLFI), 216 to 236 (SILI…VWAN), 250 to 267 (TWAF…HMRI), and 279 to 299 (LAST…FLGI).

Belongs to the CcmF/CycK/Ccl1/NrfE/CcsA family. As to quaternary structure, may interact with ccs1.

Its subcellular location is the cellular thylakoid membrane. Functionally, required during biogenesis of c-type cytochromes (cytochrome c6 and cytochrome f) at the step of heme attachment. In Prochlorococcus marinus (strain MIT 9301), this protein is Cytochrome c biogenesis protein CcsA.